The primary structure comprises 37 residues: Large ribosomal subunit protein bL36c (37 aa).

The protein belongs to the bacterial ribosomal protein bL36 family.

The protein resides in the plastid. It localises to the chloroplast. This Tupiella akineta (Green alga) protein is Large ribosomal subunit protein bL36c.